The chain runs to 946 residues: Probable inactive ATP-dependent zinc metalloprotease FTSHI 1, chloroplastic (946 aa).

The transit peptide at 1–54 directs the protein to the chloroplast; sequence MASIDNVFSLGTRFSIPENPKRSILKHATTSSFSARTQTRWRAPILRRSFTVLC. 3 helical membrane-spanning segments follow: residues 289-309, 320-340, and 369-389; these read AVIA…VFAV, VVWP…LGVL, and VASS…MVLL. 470–477 contributes to the ATP binding site; that stretch reads GPPGCGKT.

It in the N-terminal section; belongs to the AAA ATPase family. The protein in the C-terminal section; belongs to the peptidase M41 family. Oligomer.

Its subcellular location is the plastid. It is found in the chloroplast inner membrane. Functionally, functions in chloroplast biogenesis and chloroplast division. Required for plastid development during embryogenesis. Might be involved in chaperone functions or play a structural role in the thylakoid FtsH complex. The chain is Probable inactive ATP-dependent zinc metalloprotease FTSHI 1, chloroplastic from Arabidopsis thaliana (Mouse-ear cress).